Here is a 445-residue protein sequence, read N- to C-terminus: FAS-associated factor 2 (445 aa).

Residue alanine 2 is modified to N-acetylalanine. The 37-residue stretch at 12 to 48 (EQTEKLLQFQDLTGIESMDQCRHTLEQHNWNIEAAVQ) folds into the UBA domain. At lysine 167 the chain carries N6-acetyllysine. The stretch at 275–350 (SERLEREERN…EEKERKLECL (76 aa)) forms a coiled coil. Residues 299–361 (ASLRADQEKE…PEPSPDDPES (63 aa)) form a disordered region. Residues 303–348 (ADQEKERKKREERERKRRKEEEVQQQKLAEERRRQNLQEEKERKLE) show a composition bias toward basic and acidic residues. The 83-residue stretch at 357 to 439 (DDPESVKIIF…GLSHTEVLFV (83 aa)) folds into the UBX domain.

Identified in a complex that contains SEL1L, OS9, FAF2/UBXD8, UBE2J1/UBC6E and AUP1. Interacts with YOD1. Interacts (via N-terminus) with UBQLN2 (via C-terminus). Interacts with PNPLA2 and UBAC2. Interacts with ZFAND2B; probably through VCP. Interacts with LMBR1L. In terms of tissue distribution, broadly expressed, with highest levels in brain.

The protein localises to the cytoplasm. It localises to the lipid droplet. It is found in the endoplasmic reticulum. In terms of biological role, plays an important role in endoplasmic reticulum-associated degradation (ERAD) that mediates ubiquitin-dependent degradation of misfolded endoplasmic reticulum proteins. By controlling the steady-state expression of the IGF1R receptor, indirectly regulates the insulin-like growth factor receptor signaling pathway. Involved in inhibition of lipid droplet degradation by binding to phospholipase PNPL2 and inhibiting its activity by promoting dissociation of PNPL2 from its endogenous activator, ABHD5 which inhibits the rate of triacylglycerol hydrolysis. Involved in stress granule disassembly: associates with ubiquitinated G3BP1 in response to heat shock, thereby promoting interaction between ubiquitinated G3BP1 and VCP, followed by G3BP1 extraction from stress granules and stress granule disassembly. This is FAS-associated factor 2 from Homo sapiens (Human).